A 200-amino-acid chain; its full sequence is Ribonuclease T2 (200 aa).

Residues C17 and C22 are joined by a disulfide bond. The active site involves H32. A disulfide bond links C42 and C89. N-linked (GlcNAc...) asparagine glycans are attached at residues N43 and N73. Residues E82 and H86 contribute to the active site. N-linked (GlcNAc...) asparagine glycosylation is present at N116. Intrachain disulfides connect C152–C188 and C170–C180.

It belongs to the RNase T2 family.

It localises to the secreted. The protein resides in the lysosome lumen. It is found in the endoplasmic reticulum lumen. The protein localises to the mitochondrion intermembrane space. It catalyses the reaction a ribonucleotidyl-ribonucleotide-RNA + H2O = a 3'-end 3'-phospho-ribonucleotide-RNA + a 5'-end dephospho-ribonucleoside-RNA + H(+). The catalysed reaction is an adenylyl-uridine-RNA = a 3'-end 2',3'-cyclophospho-AMP-RNA + a 5'-end dephospho-uridine-RNA. The enzyme catalyses a guanylyl-uridine-RNA = a 3'-end 2',3'-cyclophospho-GMP-RNA + a 5'-end dephospho-uridine-RNA. Its activity is regulated as follows. Inhibited by Zn(2+) and Cu(2+). Functionally, ribonuclease that plays an essential role in innate immune response by recognizing and degrading RNAs from microbial pathogens that are subsequently sensed by TLR8. Cleaves preferentially single-stranded RNA molecules between purine and uridine residues, which critically contributes to the supply of catabolic uridine and the generation of purine-2',3'-cyclophosphate-terminated oligoribonucleotides. In turn, RNase T2 degradation products promote the RNA-dependent activation of TLR8. In plasmacytoid dendritic cells, it cooperates with PLD3 or PLD4 5'-&gt;3' exonucleases to process RNA fragments and release 2',3'-cyclic guanosine monophosphate (2',3'-cGMP), a potent stimulatory ligand for TLR7. Also plays a key role in degradation of mitochondrial RNA and processing of non-coding RNA imported from the cytosol into mitochondria. Participates as well in degradation of mitochondrion-associated cytosolic rRNAs. The chain is Ribonuclease T2 (RNASET2) from Sus scrofa (Pig).